We begin with the raw amino-acid sequence, 553 residues long: 5'-nucleotidase (553 aa).

The N-terminal stretch at 1–21 (MKQRLIVKTALSAAILATLAG) is a signal peptide. A lipid anchor (N-palmitoyl cysteine) is attached at C22. A lipid anchor (S-diacylglycerol cysteine) is attached at C22. A divalent metal cation contacts are provided by D45, H47, D88, N120, H221, H256, and Q258. Substrate-binding positions include F432 and 501-507 (YNAAGGD).

The protein belongs to the 5'-nucleotidase family. Requires chloride as cofactor. It depends on Mg(2+) as a cofactor.

It is found in the cell outer membrane. It catalyses the reaction a ribonucleoside 5'-phosphate + H2O = a ribonucleoside + phosphate. Functionally, degradation of extracellular 5'-nucleotides for nutritional needs. The polypeptide is 5'-nucleotidase (nutA) (Vibrio vulnificus (strain CMCP6)).